The following is a 719-amino-acid chain: Phosphoribosylformylglycinamidine synthase subunit PurL (719 aa).

His47 is an active-site residue. ATP-binding residues include Tyr50 and Lys89. A Mg(2+)-binding site is contributed by Glu91. Residues 92 to 95 and Arg114 contribute to the substrate site; that span reads SHNH. His93 acts as the Proton acceptor in catalysis. Asp115 lines the Mg(2+) pocket. Position 238 (Gln238) interacts with substrate. Position 266 (Asp266) interacts with Mg(2+). Position 310–312 (310–312) interacts with substrate; the sequence is ESQ. 2 residues coordinate ATP: Asp488 and Gly525. Asn526 contacts Mg(2+). Ser528 provides a ligand contact to substrate.

The protein belongs to the FGAMS family. In terms of assembly, monomer. Part of the FGAM synthase complex composed of 1 PurL, 1 PurQ and 2 PurS subunits.

Its subcellular location is the cytoplasm. The catalysed reaction is N(2)-formyl-N(1)-(5-phospho-beta-D-ribosyl)glycinamide + L-glutamine + ATP + H2O = 2-formamido-N(1)-(5-O-phospho-beta-D-ribosyl)acetamidine + L-glutamate + ADP + phosphate + H(+). The protein operates within purine metabolism; IMP biosynthesis via de novo pathway; 5-amino-1-(5-phospho-D-ribosyl)imidazole from N(2)-formyl-N(1)-(5-phospho-D-ribosyl)glycinamide: step 1/2. Its function is as follows. Part of the phosphoribosylformylglycinamidine synthase complex involved in the purines biosynthetic pathway. Catalyzes the ATP-dependent conversion of formylglycinamide ribonucleotide (FGAR) and glutamine to yield formylglycinamidine ribonucleotide (FGAM) and glutamate. The FGAM synthase complex is composed of three subunits. PurQ produces an ammonia molecule by converting glutamine to glutamate. PurL transfers the ammonia molecule to FGAR to form FGAM in an ATP-dependent manner. PurS interacts with PurQ and PurL and is thought to assist in the transfer of the ammonia molecule from PurQ to PurL. In Jannaschia sp. (strain CCS1), this protein is Phosphoribosylformylglycinamidine synthase subunit PurL.